The following is a 219-amino-acid chain: Germin-like protein subfamily 2 member 2 (219 aa).

An N-terminal signal peptide occupies residues Met-1–Ala-22. Cys-32 and Cys-47 are oxidised to a cystine. N-linked (GlcNAc...) asparagine glycans are attached at residues Asn-52 and Asn-70. The Cupin type-1 domain maps to Phe-59–Asp-209. 4 residues coordinate Mn(2+): His-109, His-111, Glu-116, and His-155.

It belongs to the germin family. In terms of assembly, oligomer (believed to be a pentamer but probably hexamer).

The protein localises to the secreted. It localises to the extracellular space. Its subcellular location is the apoplast. May play a role in plant defense. Probably has no oxalate oxidase activity even if the active site is conserved. The polypeptide is Germin-like protein subfamily 2 member 2 (Arabidopsis thaliana (Mouse-ear cress)).